A 439-amino-acid chain; its full sequence is Ribosomal protein uS12 methylthiotransferase RimO (439 aa).

An MTTase N-terminal domain is found at serine 2–asparagine 114. Residues cysteine 11, cysteine 45, cysteine 77, cysteine 146, cysteine 150, and cysteine 153 each contribute to the [4Fe-4S] cluster site. Residues threonine 132–glutamate 363 form the Radical SAM core domain.

Belongs to the methylthiotransferase family. RimO subfamily. [4Fe-4S] cluster is required as a cofactor.

It is found in the cytoplasm. The enzyme catalyses L-aspartate(89)-[ribosomal protein uS12]-hydrogen + (sulfur carrier)-SH + AH2 + 2 S-adenosyl-L-methionine = 3-methylsulfanyl-L-aspartate(89)-[ribosomal protein uS12]-hydrogen + (sulfur carrier)-H + 5'-deoxyadenosine + L-methionine + A + S-adenosyl-L-homocysteine + 2 H(+). Its function is as follows. Catalyzes the methylthiolation of an aspartic acid residue of ribosomal protein uS12. The chain is Ribosomal protein uS12 methylthiotransferase RimO from Campylobacter jejuni subsp. jejuni serotype O:2 (strain ATCC 700819 / NCTC 11168).